The chain runs to 357 residues: MSLKETVSNPYSKWLEATGPENDVIISSRVRLARNLMGYPFPHVLGHENADKVLYAVQSAVAQKSLQEAVGNLELSRMTELSSIERQILVEKHLISPDMLEQPEKRGVVLRDDEVISIMVNEEDHLRIQCLLPGLQLKECWDLANTVDDGLEQIIDYAFAKEQGYLTSCPTNIGTGLRASVMLHLPALVMTRQINAVLTTLSKLGLTVRGLYGEGTQATGNLFQVSNQVTLGLTEEEIIDNLITVALQLVTQERAARRALHKEQLHQIEDKVWRAYGLLKYARTMTSNETMTLLSDMRLGVDLGVITGIPPGIIMELIILSRPAFLSKVKGADLNPYQRDIFRATLIRERLNSLSNE.

The 233-residue stretch at Val24–Ala256 folds into the Phosphagen kinase C-terminal domain. ATP contacts are provided by residues Ser27 to Arg31, His93, Arg127, Arg178 to Met182, and Arg209 to Glu214. The short motif at Arg339 to Ala344 is the RDXXRA motif of the pArg binding pocket involved in allosteric regulation element.

The protein belongs to the ATP:guanido phosphotransferase family.

It carries out the reaction L-arginyl-[protein] + ATP = N(omega)-phospho-L-arginyl-[protein] + ADP + H(+). Appears to be allosterically activated by the binding of pArg-containing polypeptides to the pArg-binding pocket localized in the C-terminal domain of McsB. Catalyzes the specific phosphorylation of arginine residues in proteins. This Desulforamulus reducens (strain ATCC BAA-1160 / DSM 100696 / MI-1) (Desulfotomaculum reducens) protein is Protein-arginine kinase.